A 31-amino-acid polypeptide reads, in one-letter code: Ranatuerin-2PL (31 aa).

Cys23 and Cys29 are disulfide-bonded.

Expressed by the skin glands.

Its subcellular location is the secreted. In terms of biological role, antimicrobial activity against Gram-negative bacterium E.coli. This Lithobates palustris (Pickerel frog) protein is Ranatuerin-2PL.